The sequence spans 322 residues: CMP-sialic acid transporter 1 (322 aa).

Topologically, residues 1 to 2 (MQ) are cytoplasmic. Residues 3 to 23 (WYLVAALLTVLTSSQGILTTL) form a helical membrane-spanning segment. Residues 24–33 (SQSNGKYKYD) lie on the Lumenal side of the membrane. A helical membrane pass occupies residues 34 to 54 (YATIPFLAELFKLSFSSFFLW). At 55–75 (KECQSSSPPRMTKEWRSIRLY) the chain is on the cytoplasmic side. The helical transmembrane segment at 76 to 96 (LVPSVIYLIHNNVQFATLTYV) threads the bilayer. The Lumenal segment spans residues 97-100 (DPST). A helical transmembrane segment spans residues 101-120 (YQIMGNLKIVTTGILFRLVL). Over 121–126 (KRKLSN) the chain is Cytoplasmic. A helical membrane pass occupies residues 127 to 144 (LQWMAVVLLAVGTTTSQV). Residues 145-157 (KGCGDAPCDSLFS) are Lumenal-facing. Residues 158-178 (APFQGYMLGILSACLSALAGV) traverse the membrane as a helical segment. The Cytoplasmic segment spans residues 179 to 198 (YTEYLMKKNNDSLYWQNVQL). Residues 199–219 (YTFGVIFNMGWLIYGDFKAGF) form a helical membrane-spanning segment. Topologically, residues 220–233 (ERGPWWQRLFNGYS) are lumenal. The chain crosses the membrane as a helical span at residues 234–254 (ITTWMVVFNLGSTGLLVSWLM). The Cytoplasmic portion of the chain corresponds to 255 to 262 (KYSDNIVK). A helical membrane pass occupies residues 263 to 283 (VYSTSMGMLLTMVLSVYLFNV). The Lumenal segment spans residues 284–286 (RAT).

The protein belongs to the nucleotide-sugar transporter family. CMP-Sialate:CMP antiporter (TC 2.A.7.12) subfamily.

It localises to the golgi apparatus membrane. In terms of biological role, sugar transporter involved in the transport of CMP-sialic acid from the cytoplasm into the Golgi. May transport important nucleotide sugars such as CMP-Kdo (2-keto-3-deoxy-D-manno-octulosonic acid) in physiological conditions. This chain is CMP-sialic acid transporter 1, found in Oryza sativa subsp. indica (Rice).